The primary structure comprises 408 residues: Peptidase T (408 aa).

His-78 is a Zn(2+) binding site. Residue Asp-80 is part of the active site. A Zn(2+)-binding site is contributed by Asp-141. Residue Glu-175 is the Proton acceptor of the active site. Residues Glu-176, Asp-198, and His-380 each contribute to the Zn(2+) site.

It belongs to the peptidase M20B family. Zn(2+) is required as a cofactor.

The protein localises to the cytoplasm. The enzyme catalyses Release of the N-terminal residue from a tripeptide.. Its function is as follows. Cleaves the N-terminal amino acid of tripeptides. The sequence is that of Peptidase T from Clostridium acetobutylicum (strain ATCC 824 / DSM 792 / JCM 1419 / IAM 19013 / LMG 5710 / NBRC 13948 / NRRL B-527 / VKM B-1787 / 2291 / W).